We begin with the raw amino-acid sequence, 431 residues long: WD repeat-containing protein 18 (431 aa).

WD repeat units follow at residues 36-75, 78-116, 119-158, 170-211, 213-257, and 267-306; these read GGQA…QLQQ, MCPG…LLVI, RHYQ…QADP, QHTL…LLLS, LFDM…SFQP, and GHRN…CLRT.

It belongs to the WD repeat IPI3/WDR18 family. As to quaternary structure, component of the 5FMC complex, at least composed of PELP1, LAS1L, TEX10, WDR18 and SENP3; the complex interacts with methylated CHTOP and ZNF148. Interacts with NOL9. Component of the PELP1 complex, composed of at least PELP1, TEX10 and WDR18. The complex interacts with pre-60S ribosome particles.

The protein resides in the nucleus. The protein localises to the nucleolus. It is found in the nucleoplasm. It localises to the cytoplasm. Its subcellular location is the dynein axonemal particle. In terms of biological role, functions as a component of the Five Friends of Methylated CHTOP (5FMC) complex; the 5FMC complex is recruited to ZNF148 by methylated CHTOP, leading to desumoylation of ZNF148 and subsequent transactivation of ZNF148 target genes. Component of the PELP1 complex involved in the nucleolar steps of 28S rRNA maturation and the subsequent nucleoplasmic transit of the pre-60S ribosomal subunit. May play a role during development. The sequence is that of WD repeat-containing protein 18 (Wdr18) from Mus musculus (Mouse).